A 255-amino-acid chain; its full sequence is Homeobox protein Hox-D4 (255 aa).

The disordered stretch occupies residues Glu31–Leu127. Over residues Glu94 to Leu107 the composition is skewed to pro residues. Positions Val133 to Lys138 match the Antp-type hexapeptide motif. The segment at residues Pro154–His213 is a DNA-binding region (homeobox). Positions Asp212–Leu255 are disordered. Low complexity predominate over residues Ser222 to Ser234. Residues Ala245–Leu255 are compositionally biased toward basic and acidic residues.

It belongs to the Antp homeobox family. Deformed subfamily. In terms of assembly, forms a DNA-binding heterodimer with transcription factor PBX1.

The protein resides in the nucleus. Sequence-specific transcription factor which is part of a developmental regulatory system that provides cells with specific positional identities on the anterior-posterior axis. The protein is Homeobox protein Hox-D4 (HOXD4) of Homo sapiens (Human).